The following is a 1032-amino-acid chain: Putative oxidoreductase YgfK (1032 aa).

One can recognise a 4Fe-4S ferredoxin-type domain in the interval 928-958 (RFQTLHLDAYCNECGNCAQFCPWNGKPYKDK). Cys938, Cys941, Cys944, and Cys948 together coordinate [4Fe-4S] cluster.

It depends on [4Fe-4S] cluster as a cofactor.

Could be an iron-sulfur flavoprotein with NADPH:O(2) oxidoreductase activity. The sequence is that of Putative oxidoreductase YgfK (ygfK) from Escherichia coli O157:H7.